The chain runs to 208 residues: Probable hydrolase YcaC (208 aa).

Residue Cys118 is part of the active site.

Homooctamer composed of two tetrameric rings.

The sequence is that of Probable hydrolase YcaC (ycaC) from Escherichia coli (strain K12).